A 382-amino-acid chain; its full sequence is Ribosomal RNA large subunit methyltransferase G (382 aa).

It belongs to the methyltransferase superfamily. RlmG family.

It is found in the cytoplasm. The enzyme catalyses guanosine(1835) in 23S rRNA + S-adenosyl-L-methionine = N(2)-methylguanosine(1835) in 23S rRNA + S-adenosyl-L-homocysteine + H(+). Specifically methylates the guanine in position 1835 (m2G1835) of 23S rRNA. This Aliivibrio salmonicida (strain LFI1238) (Vibrio salmonicida (strain LFI1238)) protein is Ribosomal RNA large subunit methyltransferase G.